The primary structure comprises 318 residues: Ribosomal RNA small subunit methyltransferase H (318 aa).

Residues 34–36, D53, F82, D103, and Q110 each bind S-adenosyl-L-methionine; that span reads GGH.

This sequence belongs to the methyltransferase superfamily. RsmH family.

It localises to the cytoplasm. It catalyses the reaction cytidine(1402) in 16S rRNA + S-adenosyl-L-methionine = N(4)-methylcytidine(1402) in 16S rRNA + S-adenosyl-L-homocysteine + H(+). Functionally, specifically methylates the N4 position of cytidine in position 1402 (C1402) of 16S rRNA. The chain is Ribosomal RNA small subunit methyltransferase H from Limosilactobacillus reuteri (strain DSM 20016) (Lactobacillus reuteri).